Here is a 465-residue protein sequence, read N- to C-terminus: ATP synthase subunit beta (465 aa).

Position 148-155 (148-155 (GGAGVGKT)) interacts with ATP.

It belongs to the ATPase alpha/beta chains family. As to quaternary structure, F-type ATPases have 2 components, CF(1) - the catalytic core - and CF(0) - the membrane proton channel. CF(1) has five subunits: alpha(3), beta(3), gamma(1), delta(1), epsilon(1). CF(0) has three main subunits: a(1), b(2) and c(9-12). The alpha and beta chains form an alternating ring which encloses part of the gamma chain. CF(1) is attached to CF(0) by a central stalk formed by the gamma and epsilon chains, while a peripheral stalk is formed by the delta and b chains.

It is found in the cell inner membrane. The enzyme catalyses ATP + H2O + 4 H(+)(in) = ADP + phosphate + 5 H(+)(out). Functionally, produces ATP from ADP in the presence of a proton gradient across the membrane. The catalytic sites are hosted primarily by the beta subunits. This chain is ATP synthase subunit beta, found in Neisseria meningitidis serogroup C (strain 053442).